The sequence spans 99 residues: U1-theraphotoxin-Lsp1c (99 aa).

Residues 1–23 (MRKITIRALLLCSLLLVFHTSAA) form the signal peptide. The propeptide occupies 24–50 (AELQAQEGHLMIPGDTDTALETVDDER). Disulfide bonds link cysteine 54/cysteine 67, cysteine 58/cysteine 91, cysteine 72/cysteine 74, and cysteine 85/cysteine 96.

It belongs to the neurotoxin 12 (Hwtx-2) family. 04 (lasiotoxin) subfamily. Expressed by the venom gland.

It is found in the secreted. In terms of biological role, toxin that causes irreversible contractile paralysis into adult Aedes aegypti resulting in 100% mortality after 24 hours. The chain is U1-theraphotoxin-Lsp1c from Lasiodora sp. (strain IBSP 8539) (Brazilian salmon pink birdeater).